We begin with the raw amino-acid sequence, 162 residues long: Caveolin-2 (162 aa).

Over 1–86 (MGLETEKADV…FEISKYVIYK (86 aa)) the chain is Cytoplasmic. A Phosphotyrosine; by SRC modification is found at tyrosine 19. Phosphoserine occurs at positions 20 and 23. Tyrosine 27 carries the phosphotyrosine; by SRC modification. Positions 87 to 107 (FLTVFLAIPLAFVAGILFATL) form an intramembrane region, helical. The Cytoplasmic segment spans residues 108 to 162 (SCLHIWIIMPFVKTCLMLLPSVQTIWKSVTDVVIAPLCTSAGRSFSSVSLQLSHD).

Belongs to the caveolin family. As to quaternary structure, monomer or homodimer. Interacts with CAV1; the interaction forms a stable heterooligomeric complex that is required for targeting to lipid rafts and for caveolae formation. Tyrosine phosphorylated forms do not form heterooligomers with the Tyr-19-phosphorylated form existing as a monomer or dimer, and the Tyr-27-form as a monomer only. Interacts (tyrosine phosphorylated form) with the SH2 domain-containing proteins, RASA1, NCK1 and SRC. Interacts (tyrosine phosphorylated form) with INSR, the interaction (Tyr-27-phosphorylated form) is increased on insulin stimulation. Interacts (Tyr-19 phosphorylated form) with MAPK1 (phosphorylated form); the interaction, promoted by insulin, leads to nuclear location and MAPK1 activation. Interacts with STAT3; the interaction is increased on insulin-induced tyrosine phosphorylation leading to STAT activation. In terms of processing, phosphorylated on serine and tyrosine residues. CAV1 promotes phosphorylation on Ser-23 which then targets the complex to the plasma membrane, lipid rafts and caveolae. Phosphorylation on both Tyr-19 and Tyr-27 is required for insulin-induced 'Ser-727' phosphorylation of STAT3 and its activation. Phosphorylation on Tyr-19 is required for insulin-induced phosphorylation of MAPK1 and DNA binding of STAT3. Tyrosine phosphorylation is induced by both EGF and insulin.

It is found in the nucleus. Its subcellular location is the cytoplasm. It localises to the golgi apparatus membrane. The protein resides in the cell membrane. The protein localises to the membrane. It is found in the caveola. In terms of biological role, may act as a scaffolding protein within caveolar membranes. Interacts directly with G-protein alpha subunits and can functionally regulate their activity. Acts as an accessory protein in conjunction with CAV1 in targeting to lipid rafts and driving caveolae formation. Positive regulator of cellular mitogenesis of the MAPK signaling pathway. Required for the insulin-stimulated nuclear translocation and activation of MAPK1 and STAT3, and the subsequent regulation of cell cycle progression. The polypeptide is Caveolin-2 (CAV2) (Equus caballus (Horse)).